Here is a 149-residue protein sequence, read N- to C-terminus: Transcriptional repressor NrdR (149 aa).

A zinc finger spans residues 3–34 (CPFCSATDTKVIDSRLVADGHQVRRRRECTLC). In terms of domain architecture, ATP-cone spans 49–139 (PRVIKRDDTR…VYRAFEDVSQ (91 aa)).

Belongs to the NrdR family. The cofactor is Zn(2+).

In terms of biological role, negatively regulates transcription of bacterial ribonucleotide reductase nrd genes and operons by binding to NrdR-boxes. This is Transcriptional repressor NrdR from Shewanella denitrificans (strain OS217 / ATCC BAA-1090 / DSM 15013).